A 352-amino-acid chain; its full sequence is tRNA N6-adenosine threonylcarbamoyltransferase (352 aa).

The Fe cation site is built by H115 and H119. Substrate contacts are provided by residues 137 to 141, D170, G183, and N281; that span reads LVSGG. D309 provides a ligand contact to Fe cation.

The protein belongs to the KAE1 / TsaD family. It depends on Fe(2+) as a cofactor.

Its subcellular location is the cytoplasm. The catalysed reaction is L-threonylcarbamoyladenylate + adenosine(37) in tRNA = N(6)-L-threonylcarbamoyladenosine(37) in tRNA + AMP + H(+). Required for the formation of a threonylcarbamoyl group on adenosine at position 37 (t(6)A37) in tRNAs that read codons beginning with adenine. Is involved in the transfer of the threonylcarbamoyl moiety of threonylcarbamoyl-AMP (TC-AMP) to the N6 group of A37, together with TsaE and TsaB. TsaD likely plays a direct catalytic role in this reaction. This Methylocapsa acidiphila protein is tRNA N6-adenosine threonylcarbamoyltransferase.